The primary structure comprises 98 residues: uncharacterized protein (98 aa).

Belongs to the Rv1128c/1148c/1588c/1702c/1945/3466 family.

This is an uncharacterized protein from Mycobacterium tuberculosis (strain ATCC 25618 / H37Rv).